We begin with the raw amino-acid sequence, 131 residues long: Snaclec A8 (131 aa).

3 disulfides stabilise this stretch: cysteine 2–cysteine 13, cysteine 30–cysteine 129, and cysteine 104–cysteine 121. Residues 9–130 (HEGHCYKVFN…CGQPYRFTCE (122 aa)) form the C-type lectin domain.

The protein belongs to the snaclec family. Heterodimer; disulfide-linked. In terms of tissue distribution, expressed by the venom gland.

It localises to the secreted. Functionally, interferes with one step of hemostasis (modulation of platelet aggregation, or coagulation cascade, for example). In Macrovipera lebetinus (Levantine viper), this protein is Snaclec A8.